The following is a 292-amino-acid chain: 4-hydroxy-tetrahydrodipicolinate synthase (292 aa).

Position 45 (threonine 45) interacts with pyruvate. The active-site Proton donor/acceptor is the tyrosine 133. Catalysis depends on lysine 161, which acts as the Schiff-base intermediate with substrate. Isoleucine 203 serves as a coordination point for pyruvate.

This sequence belongs to the DapA family. Homotetramer; dimer of dimers.

It is found in the cytoplasm. The catalysed reaction is L-aspartate 4-semialdehyde + pyruvate = (2S,4S)-4-hydroxy-2,3,4,5-tetrahydrodipicolinate + H2O + H(+). It functions in the pathway amino-acid biosynthesis; L-lysine biosynthesis via DAP pathway; (S)-tetrahydrodipicolinate from L-aspartate: step 3/4. Its function is as follows. Catalyzes the condensation of (S)-aspartate-beta-semialdehyde [(S)-ASA] and pyruvate to 4-hydroxy-tetrahydrodipicolinate (HTPA). This Sodalis glossinidius (strain morsitans) protein is 4-hydroxy-tetrahydrodipicolinate synthase.